Consider the following 784-residue polypeptide: MGDEKDSWKVKTLDEILQEKKRRKEQEEKAEIKRLKNSDDRDSKRDSLEEGELRDHRMEITIRNSPYRREDSMEDRGEEDDSLAIKPPQQMSRKEKAHHRKDEKRKEKRRHRSHSAEGGKHARVKEKEREHERRKRHREEQDKARREWERQKRREMAREHSRRERDRLEQLERKRERERKLREQQKEQREQKERERRAEERRKEREARREVSAHHRTMREEYSDKGKVGHWSRSPLRPPRERFEMGDNRKPVKEEKVEERDLLSDLQDISDSERKTSSAESSSAESGSGSEEEEEEEEEEEEEEGSTSEESEEEEEEEEEEEEEETGSNSEEASEQSAEEVSDEEMSEDEDRENENHILVVPESRFDRDSGDSEEGEEEVGEGTPQSSAPTEGDYVPDSPALSPIELKQELPKYLPALQGCRSVEEFQCLNRIEEGTYGVVYRAKDKKTDEIVALKRLKMEKEKEGFPITSLREINTILKAQHPNIVTVREIVVGSNMDKIYIVMNYVEHDLKSLMETMKQPFLPGEVKTLMIQLLSGVKHLHDNWILHRDLKTSNLLLSHAGILKVGDFGLAREYGSPLKAYTPVVVTLWYRAPELLLGAKEYSTAVDMWSVGCIFGELLTQKPLFPGKSDIDQINKIFKDLGTPSEKIWPGYNDLPAVKKMTFSEYPYNNLRKRFGALLSDQGFDLMNKFLTYYPGRRINAEDGLKHEYFRETPLPIDPSMFPTWPAKSEQQRVKRGTSPRPPEGGLGYSQLGDDDLKETGFHLTTTNQGASAAGPGFSLKF.

Residues 18 to 60 (QEKKRRKEQEEKAEIKRLKNSDDRDSKRDSLEEGELRDHRMEI) show a composition bias toward basic and acidic residues. The segment at 18–401 (QEKKRRKEQE…EGDYVPDSPA (384 aa)) is disordered. A phosphoserine mark is found at S47 and S72. Residues 95-113 (EKAHHRKDEKRKEKRRHRS) show a composition bias toward basic residues. 3 stretches are compositionally biased toward basic and acidic residues: residues 114-131 (HSAE…EREH), 138-227 (REEQ…DKGK), and 238-263 (PPRE…RDLL). Position 115 is a phosphoserine (S115). Residue S270 is modified to Phosphoserine. Low complexity predominate over residues 278-289 (SAESSSAESGSG). 2 stretches are compositionally biased toward acidic residues: residues 290 to 353 (SEEE…EDRE) and 372 to 381 (DSEEGEEEVG). The region spanning 427-712 (FQCLNRIEEG…AEDGLKHEYF (286 aa)) is the Protein kinase domain. Residues 433-441 (IEEGTYGVV) and K456 contribute to the ATP site. The residue at position 471 (S471) is a Phosphoserine; by CDK7. At T477 the chain carries Phosphothreonine; by CDK7. Catalysis depends on D551, which acts as the Proton acceptor. At S578 the chain carries Phosphoserine. Residue Y583 is modified to Phosphotyrosine. Residue T584 is modified to Phosphothreonine. A Glycyl lysine isopeptide (Lys-Gly) (interchain with G-Cter in SUMO2) cross-link involves residue K630. The disordered stretch occupies residues 722-784 (SMFPTWPAKS…AAGPGFSLKF (63 aa)). At T740 the chain carries Phosphothreonine. At S741 the chain carries Phosphoserine.

This sequence belongs to the protein kinase superfamily. CMGC Ser/Thr protein kinase family. CDC2/CDKX subfamily. In terms of assembly, may interact PAK1 and RANBP9. p110C interacts with RNPS1. Interacts with CCND3. Interacts with CCNL1 and CCNL2. Forms complexes with pre-mRNA-splicing factors, including at least SRSF1, SRSF2 AND SRSF7/SLU7. Mg(2+) serves as cofactor. In terms of processing, phosphorylation at Ser-115 creates a binding site for 14-3-3 proteins.

It catalyses the reaction L-seryl-[protein] + ATP = O-phospho-L-seryl-[protein] + ADP + H(+). The enzyme catalyses L-threonyl-[protein] + ATP = O-phospho-L-threonyl-[protein] + ADP + H(+). With respect to regulation, phosphorylation at Thr-437 or Tyr-438 inactivates the enzyme, while phosphorylation at Thr-584 activates it. Functionally, plays multiple roles in cell cycle progression, cytokinesis and apoptosis. Involved in pre-mRNA splicing in a kinase activity-dependent manner. May act as a negative regulator of normal cell cycle progression. The sequence is that of Cyclin-dependent kinase 11B (Cdk11b) from Mus musculus (Mouse).